The primary structure comprises 154 residues: Lipoprotein signal peptidase (154 aa).

2 helical membrane-spanning segments follow: residues leucine 57–tyrosine 77 and isoleucine 86–valine 103. Residues aspartate 110 and aspartate 129 contribute to the active site. Residues valine 124–valine 144 form a helical membrane-spanning segment.

This sequence belongs to the peptidase A8 family.

Its subcellular location is the cell membrane. It catalyses the reaction Release of signal peptides from bacterial membrane prolipoproteins. Hydrolyzes -Xaa-Yaa-Zaa-|-(S,diacylglyceryl)Cys-, in which Xaa is hydrophobic (preferably Leu), and Yaa (Ala or Ser) and Zaa (Gly or Ala) have small, neutral side chains.. It functions in the pathway protein modification; lipoprotein biosynthesis (signal peptide cleavage). This protein specifically catalyzes the removal of signal peptides from prolipoproteins. The protein is Lipoprotein signal peptidase of Clostridium acetobutylicum (strain ATCC 824 / DSM 792 / JCM 1419 / IAM 19013 / LMG 5710 / NBRC 13948 / NRRL B-527 / VKM B-1787 / 2291 / W).